Here is a 134-residue protein sequence, read N- to C-terminus: Replication enhancer protein (134 aa).

This sequence belongs to the geminiviridae replication enhancer protein family. Homooligomer. Interacts with the replication-associated protein (REP). Interacts with host proliferating cell nuclear antigen (PCNA). Interacts with host retinoblastoma-related protein 1 (RBR1), and may thereby deregulate the host cell cycle. Oligomerization and interaction with PCNA are necessary for optimal replication enhancement.

Increases viral DNA accumulation. Enhances infectivity and symptom expression. This is Replication enhancer protein from Nicotiana tabacum (Common tobacco).